We begin with the raw amino-acid sequence, 149 residues long: Dehydrin Rab15 (149 aa).

The disordered stretch occupies residues 1–149; that stretch reads MEFQGQHDNP…KIKEKLPGQH (149 aa). Basic and acidic residues predominate over residues 78–93; the sequence is KEKIKEKLPGGHKDNQ. Gly residues predominate over residues 100–117; that stretch reads TGTGGAYGPGTGTGGAYG. A compositionally biased stretch (basic and acidic residues) spans 132 to 149; it reads GEKKGIMDKIKEKLPGQH.

This sequence belongs to the plant dehydrin family.

The sequence is that of Dehydrin Rab15 (RAB15) from Triticum aestivum (Wheat).